Reading from the N-terminus, the 432-residue chain is Enolase (432 aa).

Residue glutamine 163 participates in (2R)-2-phosphoglycerate binding. The Proton donor role is filled by glutamate 205. Residues aspartate 242, glutamate 288, and aspartate 315 each coordinate Mg(2+). Residues lysine 340, arginine 369, serine 370, and lysine 391 each coordinate (2R)-2-phosphoglycerate. Lysine 340 (proton acceptor) is an active-site residue.

Belongs to the enolase family. As to quaternary structure, homodimer. Mg(2+) is required as a cofactor.

It is found in the cytoplasm. It localises to the secreted. The protein localises to the cell surface. The enzyme catalyses (2R)-2-phosphoglycerate = phosphoenolpyruvate + H2O. The protein operates within carbohydrate degradation; glycolysis; pyruvate from D-glyceraldehyde 3-phosphate: step 4/5. The covalent binding to the substrate causes inactivation of the enzyme, and possibly serves as a signal for the export of the protein. Its function is as follows. Catalyzes the reversible conversion of 2-phosphoglycerate (2-PG) into phosphoenolpyruvate (PEP). It is essential for the degradation of carbohydrates via glycolysis. The sequence is that of Enolase from Enterococcus hirae.